Here is a 200-residue protein sequence, read N- to C-terminus: Inner membrane-spanning protein YciB (200 aa).

6 consecutive transmembrane segments (helical) span residues 7-27 (HPLF…VVNA), 32-52 (FAAT…SYVV), 56-76 (VPLM…LTLV), 93-113 (LFAA…AIMF), 126-146 (ILTF…EIIW), and 153-173 (FWVG…AIAQ).

The protein belongs to the YciB family.

The protein resides in the cell inner membrane. Its function is as follows. Plays a role in cell envelope biogenesis, maintenance of cell envelope integrity and membrane homeostasis. The protein is Inner membrane-spanning protein YciB of Bradyrhizobium sp. (strain BTAi1 / ATCC BAA-1182).